Here is a 230-residue protein sequence, read N- to C-terminus: Potassium/proton antiporter CemA (230 aa).

A run of 4 helical transmembrane segments spans residues 7-27 (LPSL…SFSF), 106-126 (IILH…FFFL), 145-165 (LNDS…VGFH), and 181-201 (LGWA…PVIL).

The protein belongs to the CemA family.

It is found in the plastid. The protein localises to the chloroplast inner membrane. The enzyme catalyses K(+)(in) + H(+)(out) = K(+)(out) + H(+)(in). Functionally, contributes to K(+)/H(+) antiport activity by supporting proton efflux to control proton extrusion and homeostasis in chloroplasts in a light-dependent manner to modulate photosynthesis. Prevents excessive induction of non-photochemical quenching (NPQ) under continuous-light conditions. Indirectly promotes efficient inorganic carbon uptake into chloroplasts. The protein is Potassium/proton antiporter CemA of Lolium perenne (Perennial ryegrass).